The sequence spans 304 residues: Acetylglutamate kinase (304 aa).

Substrate contacts are provided by residues 72–73, Arg-94, and Asn-199; that span reads GG.

It belongs to the acetylglutamate kinase family. ArgB subfamily.

The protein resides in the cytoplasm. The enzyme catalyses N-acetyl-L-glutamate + ATP = N-acetyl-L-glutamyl 5-phosphate + ADP. The protein operates within amino-acid biosynthesis; L-arginine biosynthesis; N(2)-acetyl-L-ornithine from L-glutamate: step 2/4. In terms of biological role, catalyzes the ATP-dependent phosphorylation of N-acetyl-L-glutamate. This is Acetylglutamate kinase from Methylobacterium nodulans (strain LMG 21967 / CNCM I-2342 / ORS 2060).